The sequence spans 131 residues: Major pollen allergen Pla l 1 (131 aa).

3 disulfides stabilise this stretch: C17/C86, C20/C131, and C42/C74. Zn(2+) contacts are provided by H21, D45, D73, and E88. N107 carries an N-linked (GlcNAc...) asparagine glycan.

It belongs to the Ole e I family. Post-translationally, exists in two variants: glycosylated and non-glycosylated. Carries a complex, major N-linked glycan, with a alpha-1,3-fucose residue in its structure and probably also a beta-1,2-xylose. The average modification of molecular mass due to glycosylation is approximately 969 Da.

The protein localises to the secreted. The sequence is that of Major pollen allergen Pla l 1 from Plantago lanceolata (English plantain).